The primary structure comprises 363 residues: uncharacterized protein (363 aa).

This is an uncharacterized protein from Saccharomyces cerevisiae (strain ATCC 204508 / S288c) (Baker's yeast).